The primary structure comprises 4691 residues: MVAGMLMPLDRLRAIYEVLFREGVMVAKKDRRPRSLHPHVPGVTNLQVMRAMASLKARGLVRETFAWCHFYWYLTNEGIDHLRQYLHLPPEIVPASLQRVRRPVAMVIPARRRSPHVQTMQGPLGCPPKRGPLPAEDPAREERQVYRRKEREEGAPETPVVSATTVGTLARPGPEPAPATDERDRVQKKTFTKWVNKHLIKHWRAEAQRHISDLYEDLRDGHNLISLLEVLSGDSLPREKGRMRFHKLQNVQIALDYLRHRQVKLVNIRNDDIADGNPKLTLGLIWTIILHFQISDIQVSGQSEDMTAKEKLLLWSQRMVEGYQGLRCDNFTTSWRDGRLFNAIIHRHKPMLIDMNKVYRQTNLENLDQAFSVAERDLGVTRLLDPEDVDVPQPDEKSIITYVSSLYDAMPRVPGAQDGVRANELQLRWQEYRELVLLLLQWIRHHTAAFEERKFPSSFEEIEILWCQFLKFKETELPAKEADKNRSKVIYQSLEGAVQAGQLKIPPGYHPLDVEKEWGKLHVAILEREKQLRSEFERLECLQRIVSKLQMEAGLCEEQLNQADALLQSDIRLLASGKVAQRAGEVERDLDKADGMIRLLFNDVQTLKDGRHPQGEQMYRRVYRLHERLVAIRTEYNLRLKAGVGAPVTQVTLQSTQRRPELEDSTLRYLQDLLAWVEENQRRIDSAEWGVDLPSVEAQLGSHRGMHQSIEEFRAKIERARNDESQLSPATRGAYRDCLGRLDLQYAKLLNSSKARLRSLESLHGFVAAATKELMWLNEKEEEEVGFDWSDRNTNMAAKKESYSALMRELEMKEKKIKEIQNTGDRLLREDHPARPTVESFQAALQTQWSWMLQLCCCIEAHLKENTAYFQFFSDVREAEEQLQKLQETLRRKYSCDRTITVTRLEDLLQDAQDEKEQLNEYKGHLSGLAKRAKAIVQLKPRNPAHPVRGHVPLIAVCDYKQVEVTVHKGDQCQLVGPAQPSHWKVLSGSSSEAAVPSVCFLVPPPNQEAQEAVARLEAQHQALVTLWHQLHVDMKSLLAWQSLSRDIQLIRSWSLVTFRTLKPEEQRQALRNLELHYQAFLRDSQDAGGFGPEDRLVAEREYGSCSRHYQQLLQSLEQGEQEESRCQRCISELKDIRLQLEACETRTVHRLRLPLDKDPARECAQRIAEQQKAQAEVEGLGKGVARLSAEAEKVLALPEPSPAAPTLRSELELTLGKLEQVRSLSAIYLEKLKTISLVIRSTQGAEEVLKTHEEQLKEAQAVPATLQELEATKASLKKLRAQAEAQQPVFNTLRDELRGAQEVGERLQQRHGERDVEVERWRERVTQLLERWQAVLAQTDVRQRELEQLGRQLRYYRESADPLSAWLQDAKRRQEQIQAVPIANCQAAREQLRQEKALLEEIERHGEKVEECQKFAKQYINAIKDYELQLITYKAQLEPVASPAKKPKVQSGSESVIQEYVDLRTRYSELTTLTSQYIKFISETLRRMEEEERLAEQQRAEERERLAEVEAALEKQRQLAEAHAQAKAQAELEAQELQRRMQEEVARREEAAVDAQQQKRSIQEELQHLRQSSEAEIQAKAQQVEAAERSRMRIEEEIRVVRLQLETTERQRGGAEGELQALRARAEEAEAQKRQAQEEAERLRRQVQDESQRKRQAEAELALRVKAEAEAAREKQRALQALDELRLQAEEAERRLRQAEAERARQVQVALETAQRSAEVELQSKRASFAEKTAQLERTLQEEHVTVAQLREEAERRAQQQAEAERAREEAERELERWQLKANEALRLRLQAEEVAQQKSLAQADAEKQKEEAEREARRRGKAEEQAVRQRELAEQELEKQRQLAEGTAQQRLAAEQELIRLRAETEQGEQQRQLLEEELARLQHEATAATQKRQELEAELAKVRAEMEVLLASKARAEEESRSTSEKSKQRLEAEAGRFRELAEEAARLRALAEEAKRQRQLAEEDAARQRAEAERVLTEKLAAISEATRLKTEAEIALKEKEAENERLRRLAEDEAFQRRRLEEQAALHKADIEERLAQLRKASESELERQKGLVEDTLRQRRQVEEEIMALKVSFEKAAAGKAELELELGRIRSNAEDTMRSKEQAELEAARQRQLAAEEEQRRREAEERVQRSLAAEEEAARQRKVALEEVERLKAKVEEARRLRERAEQESARQLQLAQEAAQKRLQAEEKAHAFVVQQREEELQQTLQQEQNMLDRLRSEAEAARRAAEEAEEAREQAEREAAQSRKQVEEAERLKQSAEEQAQAQAQAQAAAEKLRKEAEQEAARRAQAEQAALKQKQAADAEMEKHKKFAEQTLRQKAQVEQELTTLRLQLEETDHQKSILDEELQRLKAEVTEAARQRSQVEEELFSVRVQMEELGKLKARIEAENRALILRDKDNTQRFLEEEAEKMKQVAEEAARLSVAAQEAARLRQLAEEDLAQQRALAEKMLKEKMQAVQEATRLKAEAELLQQQKELAQEQARRLQEDKEQMAQQLVEETQGFQRTLEAERQRQLEMSAEAERLKLRMAEMSRAQARAEEDAQRFRKQAEEIGEKLHRTELATQEKVTLVQTLEIQRQQSDHDAERLREAIAELEREKEKLKQEAKLLQLKSEEMQTVQQEQILQETQALQKSFLSEKDSLLQRERFIEQEKAKLEQLFQDEVAKAKQLREEQQRQQQQMEQEKQELMASMEEARRRQREAEEGVRRKQEELQHLEQQRQQQEKLLAEENQRLRERLQRLEEEHRAALAHSEIATTQAASTKALPNGRDAPDGPSVEAEPEYTFEGLRQKVPAQQLQEAGILSQEELQRLAQGHTTVAELTQREDVYRYLKGRSSIAGLLLKPTNEKLSVYTALQRQLLSPGTALILLEAQAASGFLLDPVRNRRLTVNEAVKEGVVGPELHHKLLSAERAVTGYKDPYTGEQISLFQAMKKDLIVRDHGVRLLEAQIATGGIIDPVHSHRVPVDVAYKRGYFDEEMNRILSDPSDDTKGFFDPNTHENLTYLQLLERCVEDPETGLRLLPLTDKAAKGGELVYTDTEARDVFEKATVSAPFGKFQGRTVTIWEIINSEYFTAEQRRDLLQQFRTGHITVEKIIKIVITVVEEHERKGQLCFEGLRALVPAAELLDSGVISHELYQQLQRGERSVREVAEADSVRQALRGTNVIAGVWLEEAGQKLSIYEALKKDLLQPEVAVALLEAQAGTGHIIDPATSARLTVDEAVRAGLVGPELHEKLLSAEKAVTGYRDPYSGQSVSLFQALKKGLIPREQGLRLLDAQLSTGGIVDPSKSHRVPLDVAYARGYLDKETNRALTSPRDDARVYHDPSTQEPVTYSQLQQRCRSDQLTGLSLLPLSEKAVRARQEEVYSELQARETLEQAKVEVPVGSFKGRAMTVWELISSEYFTEEQRQELLRQFRTGKVTVEKVIKIVITIVEEVETRRQERLSFSGLRAPVPASELLDAKILSRAQFDQLKDGKTSVKELSEVGSVRTLLQGSGCLAGIYLEDSKEKVTIYEAMRRGLLRPSTATLLLEAQAATGFLVDPVRNQRLYVHEAVKAGVVGPELHEKLLSAEKAVTGYKDPYSGNTISLFQAMKKGLVLRDHAIRLLEAQVATGGIIDPVHSHRLPVDVAYQRGYFDEEMNRVLADPSDDTKGFFDPNTHENLTYLQLLERCVEDPETGLRLLPLKGAEKTEVVETTQVYTEEETRRAFEETQIDIPGGGSHGGSSMSLWEVMQSNMIPEDQRARLMADFQAGRVTKERMIIIIIEIIEKTEIIRQQNLASYDYVRRRLTAEDLYEARIISLETYNLFREGTKNLREVLEMESAWRYLYGTGAVAGVYLPGSRQTLTIYQALKKGLLSAEVARLLLEAQAATGFLLDPVKGERLTVDEAVRKGLVGPELHDRLLSAERAVTGYRDPYTEQTISLFQAMKKELIPAEEALRLLDAQLATGGIVDPRLGFHLPLEVAYQRGYLNKDTHDQLSEPSEVRSYVDPSTDERLSYTQLLKRCRRDDPSGQMLLLLSDARKLTFRGLRKQITVEELVRSQVMDEATALQLQEGLTSIEEVTKNLQKFLEGTSCIAGVFVDATKERLSVYQAMKKGIIRPGTAFELLEAQAATGYVIDPIKGLKLTVEEAVRMGIVGPEFKDKLLSAERAVTGYKDPYSGKLISLFQAMKKGLILKDHGIRLLEAQIATGGIIDPEESHRLPVEVAYKRGLFDEEMNEILTDPSDDTKGFFDPNTEENLTYLQLMERCITDPQTGLCLLPLKEKKRERKTSSKSSVRKRRVVIVDPETGKEMSVYEAYRKGLIDHQTYLELSEQECEWEEITISSSDGVVKSMIIDRRSGRQYDIDDAITKNLIDRSALDQYRAGTLSITEFADMLSGNAGGFRSRSSSVGSSSSYPISSAGPRTQLASWSDPTEETGPVAGILDTETLEKVSITEAMHRNLVDNITGQRLLEAQACTGGIIDPSTGERFPVTEAVNKGLVDKIMVDRINLAQKAFCGFEDPRTKTKMSAAQALKKGWLYYEAGQRFLEVQYLTGGLIEPDTPGRVSLDEALQRGTVDARTAQKLRDVSAYSKYLTCPKTKLKISYKDALDRSMVEEGTGLRLLEAAAQSSKGYYSPYSVSGSGSTAGSRTGSRTGSRAGSRRGSFDATGSGFSMTFSSSSYSSSGYGRRYASGPSASLGGPESAVA.

The segment at 1 to 1478 (MVAGMLMPLD…SELTTLTSQY (1478 aa)) is globular 1. A Phosphoserine modification is found at arginine 21. Valine 26 carries the post-translational modification Phosphotyrosine. Disordered regions lie at residues 113–161 (RSPH…TPVV) and 167–186 (GTLA…RDRV). A compositionally biased stretch (basic and acidic residues) spans 137 to 154 (DPAREERQVYRRKEREEG). Residues 181 to 411 (DERDRVQKKT…YVSSLYDAMP (231 aa)) are actin-binding. 2 consecutive Calponin-homology (CH) domains span residues 185–293 (RVQK…LHFQ) and 306–411 (MTAK…DAMP). The stretch at 653–727 (LQSTQRRPEL…ERARNDESQL (75 aa)) is one Spectrin 1 repeat. Serine 728 bears the Phosphoserine mark. Spectrin repeat units follow at residues 748–832 (KLLN…REDH) and 845–938 (LQTQ…AIVQ). A Phosphothreonine modification is found at threonine 823. The 58-residue stretch at 949–1006 (RGHVPLIAVCDYKQVEVTVHKGDQCQLVGPAQPSHWKVLSGSSSEAAVPSVCFLVPPP) folds into the SH3 domain. Positions 963–4572 (VEVTVHKGDQ…ARTAQKLRDV (3610 aa)) are required for interaction with intermediate filament proteins. Residue serine 1055 is modified to Phosphoserine. The stretch at 1323 to 1423 (RERVTQLLER…QKFAKQYINA (101 aa)) is one Spectrin 4 repeat. A Phosphoserine modification is found at serine 1443. 2 coiled-coil regions span residues 1477–1697 (QYIK…ERRL) and 1729–2764 (SFAE…TTQA). Residues 1479 to 2762 (IKFISETLRR…ALAHSEIATT (1284 aa)) form a central fibrous rod domain region. Residues 1626-1653 (RAEEAEAQKRQAQEEAERLRRQVQDESQ) form a disordered region. At serine 1729 the chain carries Phosphoserine. Lysine 1733 bears the N6-acetyllysine mark. Disordered regions lie at residues 1801-1835 (SLAQ…RELA), 2100-2141 (AEDT…SLAA), and 2223-2317 (RLRS…KHKK). Basic and acidic residues-rich tracts occupy residues 1806–1835 (DAEK…RELA), 2100–2116 (AEDT…EAAR), 2124–2136 (EEQR…ERVQ), and 2223–2266 (RLRS…KQSA). Low complexity predominate over residues 2267-2280 (EEQAQAQAQAQAAA). The span at 2281 to 2296 (EKLRKEAEQEAARRAQ) shows a compositional bias: basic and acidic residues. Position 2639 is a phosphoserine (serine 2639). Residue lysine 2644 is modified to N6-acetyllysine. The disordered stretch occupies residues 2675–2728 (LREEQQRQQQQMEQEKQELMASMEEARRRQREAEEGVRRKQEELQHLEQQRQQQ). Positions 2687–2728 (EQEKQELMASMEEARRRQREAEEGVRRKQEELQHLEQQRQQQ) are enriched in basic and acidic residues. The tract at residues 2763 to 4691 (QAASTKALPN…SLGGPESAVA (1929 aa)) is globular 2. Serine 2781 carries the post-translational modification Phosphoserine. Position 2788 is a phosphotyrosine (tyrosine 2788). Plectin repeat units lie at residues 2795–2832 (QKVP…REDV), 2833–2870 (YRYL…PGTA), 2871–2908 (LILL…PELH), 2909–2946 (HKLL…RDHG), 2947–2984 (VRLL…EEMN), and 2988–3022 (SDPS…PETG). The residue at position 2809 (serine 2809) is a Phosphoserine. Threonine 2893 carries the post-translational modification Phosphothreonine. Tyrosine 3040 carries the phosphotyrosine modification. N6-acetyllysine is present on residues lysine 3060 and lysine 3098. Plectin repeat units follow at residues 3123-3160 (ALVP…ADSV), 3161-3198 (RQAL…PEVA), 3199-3236 (VALL…PELH), 3237-3274 (EKLL…REQG), 3275-3312 (LRLL…KETN), and 3315-3350 (LTSP…QLTG). The segment covering 3312–3326 (NRALTSPRDDARVYH) has biased composition (basic and acidic residues). A disordered region spans residues 3312–3338 (NRALTSPRDDARVYHDPSTQEPVTYSQ). The segment covering 3328–3338 (PSTQEPVTYSQ) has biased composition (polar residues). Tyrosine 3369 carries the post-translational modification Phosphotyrosine. At lysine 3427 the chain carries N6-acetyllysine. 5 Plectin repeats span residues 3492–3529 (RTLL…PSTA), 3530–3567 (TLLL…PELH), 3568–3605 (EKLL…RDHA), 3606–3643 (IRLL…EEMN), and 3647–3681 (ADPS…PETG). The residue at position 3792 (threonine 3792) is a Phosphothreonine. Tyrosine 3797 bears the Phosphotyrosine mark. 5 Plectin repeats span residues 3827–3864 (WRYL…AEVA), 3865–3902 (RLLL…PELH), 3903–3940 (DRLL…AEEA), 3941–3978 (LRLL…KDTH), and 3982–4015 (SEPS…DPSG). The required for interaction with type2 keratins, DES and VIM stretch occupies residues 3954–4291 (VDPRLGFHLP…KRRVVIVDPE (338 aa)). Threonine 4037 bears the Phosphothreonine mark. Residue serine 4061 is modified to Phosphoserine. Plectin repeat units lie at residues 4070-4107 (QKFL…PGTA), 4108-4145 (FELL…PEFK), 4146-4183 (DKLL…KDHG), 4184-4221 (IRLL…EEMN), 4225-4259 (TDPS…PQTG), and 4272-4312 (RKTS…HQTY). Positions 4257 to 4307 (QTGLCLLPLKEKKRERKTSSKSSVRKRRVVIVDPETGKEMSVYEAYRKGLI) are binding to intermediate filaments. The tract at residues 4387–4420 (FRSRSSSVGSSSSYPISSAGPRTQLASWSDPTEE) is disordered. Residues serine 4389, serine 4391, serine 4392, serine 4393, serine 4396, serine 4397, serine 4398, and serine 4399 each carry the phosphoserine modification. The segment covering 4389 to 4404 (SRSSSVGSSSSYPISS) has biased composition (low complexity). Phosphotyrosine is present on tyrosine 4400. 2 positions are modified to phosphoserine: serine 4403 and serine 4413. Positions 4406–4416 (GPRTQLASWSD) are enriched in polar residues. Plectin repeat units lie at residues 4415-4452 (SDPT…NITG), 4453-4490 (QRLL…KIMV), 4491-4528 (DRIN…YEAG), 4529-4566 (QRFL…ARTA), and 4567-4604 (QKLR…EGTG). A Phosphothreonine modification is found at threonine 4418. The interval 4503–4572 (FEDPRTKTKM…ARTAQKLRDV (70 aa)) is required for efficient interaction with KRT5 and KRT14 heterodimers. Threonine 4546 is subject to Phosphothreonine; by CDK1. Serine 4614 and serine 4620 each carry phosphoserine. A compositionally biased stretch (low complexity) spans 4618–4678 (YYSPYSVSGS…SGYGRRYASG (61 aa)). The interval 4618-4691 (YYSPYSVSGS…SLGGPESAVA (74 aa)) is disordered. Residue tyrosine 4622 is modified to Phosphotyrosine. 3 positions are modified to phosphoserine: serine 4623, serine 4625, and serine 4629. Threonine 4630 is modified (phosphothreonine). The 4 X 4 AA tandem repeats of G-S-R-X stretch occupies residues 4632–4647 (GSRTGSRTGSRAGSRR). At serine 4633 the chain carries Phosphoserine. An omega-N-methylarginine mark is found at arginine 4634 and arginine 4647. Phosphoserine occurs at positions 4649 and 4682.

The protein belongs to the plakin or cytolinker family. As to quaternary structure, homodimer or homotetramer. Interacts (via actin-binding domain) with SYNE3. Interacts (via calponin-homology (CH) 1 domain) with VIM (via rod region). Interacts (via N-terminus) with DST isoform 2 (via N-terminus). Interacts with FER. Interacts with TOR1A. Interacts with ANK3. Identified in complexes that contain VIM, EZR, AHNAK, BFSP1, BFSP2, ANK2, PLEC, PRX and spectrin. In terms of assembly, interacts with KRT14, heterodimers consisting of KRT8 and KRT18, heterodimers consisting of KRT5 and KRT14, heterodimers consisting of KRT14 and KRT15, and heterodimers consisting of KRT1 and KRT10. Interacts with DES and VIM. Phosphorylated by CDK1; regulates dissociation from intermediate filaments during mitosis. Isoform PLEC-1A is phosphorylated on Ser-21. Isoform PLEC-1A is phosphorylated on Tyr-26. As to expression, detected in eye lens fiber cells (at protein level). Expressed at high levels in lung, brain, small intestine, muscle, heart and skin with lower levels found in kidney, liver, uterus, spleen and salivary gland.

The protein resides in the cytoplasm. It is found in the cytoskeleton. The protein localises to the cell junction. It localises to the hemidesmosome. Its subcellular location is the cell projection. The protein resides in the podosome. Functionally, interlinks intermediate filaments with microtubules and microfilaments and anchors intermediate filaments to desmosomes or hemidesmosomes. May be involved not only in the cross-linking and stabilization of cytoskeletal intermediate filaments network, but also in the regulation of their dynamics. This is Plectin (Plec) from Mus musculus (Mouse).